A 48-amino-acid polypeptide reads, in one-letter code: uncharacterized protein (48 aa).

This is an uncharacterized protein from Mus musculus domesticus (western European house mouse).